Consider the following 551-residue polypeptide: Palatinase (551 aa).

The active-site Nucleophile is Asp201. Glu243 acts as the Proton donor in catalysis.

Belongs to the glycosyl hydrolase 13 family.

It carries out the reaction 6-O-alpha-D-glucopyranosyl-D-fructose + H2O = alpha-D-glucose + D-fructose. It functions in the pathway glycan degradation; palatinose degradation. In terms of biological role, catalyzes the hydrolysis of palatinose. Shows a strict specificity toward palatinose, and cannot release glucose from the disaccharides sucrose, maltose, trehalose and melibiose. Involved in the degradation of palatinose, a sucrose isomer that is formed as a reserve material under conditions of excess carbon availability, sequestered in a form unavailable to competitors such as fungi or the host plant, and whose consumption appears to be postponed until the preferentially metabolized carbon source (e.g. sucrose) is depleted. The chain is Palatinase from Erwinia rhapontici (Pectobacterium rhapontici).